We begin with the raw amino-acid sequence, 198 residues long: Holliday junction resolvase RecU (198 aa).

The interval 1-21 (MVNYPHKLSSQKRQPSLSQPK) is disordered. A compositionally biased stretch (polar residues) spans 11–21 (QKRQPSLSQPK). Mg(2+) is bound by residues Thr-81, Asp-83, Glu-96, and Gln-115.

The protein belongs to the RecU family. It depends on Mg(2+) as a cofactor.

The protein localises to the cytoplasm. It catalyses the reaction Endonucleolytic cleavage at a junction such as a reciprocal single-stranded crossover between two homologous DNA duplexes (Holliday junction).. Its function is as follows. Endonuclease that resolves Holliday junction intermediates in genetic recombination. Cleaves mobile four-strand junctions by introducing symmetrical nicks in paired strands. Promotes annealing of linear ssDNA with homologous dsDNA. Required for DNA repair, homologous recombination and chromosome segregation. The protein is Holliday junction resolvase RecU of Streptococcus pneumoniae (strain Taiwan19F-14).